Here is a 469-residue protein sequence, read N- to C-terminus: Uronate isomerase (469 aa).

The protein belongs to the metallo-dependent hydrolases superfamily. Uronate isomerase family.

It carries out the reaction D-glucuronate = D-fructuronate. It catalyses the reaction aldehydo-D-galacturonate = keto-D-tagaturonate. The protein operates within carbohydrate metabolism; pentose and glucuronate interconversion. The polypeptide is Uronate isomerase (Rhizobium meliloti (strain 1021) (Ensifer meliloti)).